Here is a 414-residue protein sequence, read N- to C-terminus: Snake venom metalloproteinase (414 aa).

A signal peptide spans 1–20 (MIEVLLVTICLAVFPYQGSS). A propeptide spanning residues 21-190 (IILESGNVND…KASDLNFNSD (170 aa)) is cleaved from the precursor. Gln191 is subject to Pyrrolidone carboxylic acid. The 197-residue stretch at 197 to 393 (RYVELVIVAD…YKPQCILNKP (197 aa)) folds into the Peptidase M12B domain. The Ca(2+) site is built by Glu200 and Asp284. 2 disulfides stabilise this stretch: Cys308–Cys388 and Cys348–Cys355. His333 serves as a coordination point for Zn(2+). The active site involves Glu334. Zn(2+) is bound by residues His337 and His343. Cys388 and Asn391 together coordinate Ca(2+). Residues 394 to 414 (LRIDPVSTPVSGNELLEAGEE) constitute a propeptide that is removed on maturation.

This sequence belongs to the venom metalloproteinase (M12B) family. P-I subfamily. As to quaternary structure, monomer. Zn(2+) serves as cofactor. Expressed by the venom gland.

The protein localises to the secreted. Snake venom metalloproteinase that impairs hemostasis in the envenomed animal. The polypeptide is Snake venom metalloproteinase (Crotalus molossus molossus (Northern black-tailed rattlesnake)).